A 221-amino-acid chain; its full sequence is UPF0328 protein ECU11_2110 (221 aa).

It belongs to the UPF0328 family.

The sequence is that of UPF0328 protein ECU11_2110 from Encephalitozoon cuniculi (strain GB-M1) (Microsporidian parasite).